Consider the following 119-residue polypeptide: Large ribosomal subunit protein uL18 (119 aa).

The protein belongs to the universal ribosomal protein uL18 family. In terms of assembly, part of the 50S ribosomal subunit; part of the 5S rRNA/L5/L18/L25 subcomplex. Contacts the 5S and 23S rRNAs.

Functionally, this is one of the proteins that bind and probably mediate the attachment of the 5S RNA into the large ribosomal subunit, where it forms part of the central protuberance. In Mycoplasmoides gallisepticum (strain R(low / passage 15 / clone 2)) (Mycoplasma gallisepticum), this protein is Large ribosomal subunit protein uL18.